The following is a 218-amino-acid chain: 3-dehydroquinate dehydratase (218 aa).

3-dehydroquinate is bound by residues 29 to 31 (EFR) and Arg-56. His-116 acts as the Proton donor/acceptor in catalysis. The Schiff-base intermediate with substrate role is filled by Lys-142. The 3-dehydroquinate site is built by Arg-180, Ser-200, and Gln-204.

The protein belongs to the type-I 3-dehydroquinase family. In terms of assembly, homodimer.

The enzyme catalyses 3-dehydroquinate = 3-dehydroshikimate + H2O. The protein operates within metabolic intermediate biosynthesis; chorismate biosynthesis; chorismate from D-erythrose 4-phosphate and phosphoenolpyruvate: step 3/7. Functionally, involved in the third step of the chorismate pathway, which leads to the biosynthesis of aromatic amino acids. Catalyzes the cis-dehydration of 3-dehydroquinate (DHQ) and introduces the first double bond of the aromatic ring to yield 3-dehydroshikimate. The protein is 3-dehydroquinate dehydratase of Methanococcus vannielii (strain ATCC 35089 / DSM 1224 / JCM 13029 / OCM 148 / SB).